A 319-amino-acid chain; its full sequence is Ubiquinone biosynthesis protein COQ4, mitochondrial (319 aa).

Residues 1–28 (MISRSIFSKSVSLQRSQNRSFLLTAASA) constitute a mitochondrion transit peptide. Positions 205, 206, 209, and 221 each coordinate Zn(2+).

This sequence belongs to the COQ4 family. As to quaternary structure, component of a multi-subunit COQ enzyme complex, composed of at least COQ3, COQ4, COQ5, COQ6, COQ7 and COQ9. Zn(2+) serves as cofactor.

The protein resides in the mitochondrion inner membrane. It carries out the reaction a 4-hydroxy-3-methoxy-5-(all-trans-polyprenyl)benzoate + H(+) = a 2-methoxy-6-(all-trans-polyprenyl)phenol + CO2. It functions in the pathway cofactor biosynthesis; ubiquinone biosynthesis. Lyase that catalyzes the C1-decarboxylation of 4-hydroxy-3-methoxy-5-(all-trans-polyprenyl)benzoic acid into 2-methoxy-6-(all-trans-polyprenyl)phenol during ubiquinone biosynthesis. The polypeptide is Ubiquinone biosynthesis protein COQ4, mitochondrial (Clavispora lusitaniae (strain ATCC 42720) (Yeast)).